The sequence spans 154 residues: OCIA domain-containing protein 2 (154 aa).

Residues 1–22 (MASASARGNQDKDAHFPPPSKQ) are disordered. The 120-residue stretch at 1–120 (MASASARGNQ…HFFEDQLRGA (120 aa)) folds into the OCIA domain. At K41 the chain carries N6-acetyllysine.

As to quaternary structure, interacts (via OCIA domain) with OCIAD1/ASRIJ and STAT3.

The protein resides in the endosome. It is found in the mitochondrion. It localises to the mitochondrion inner membrane. Functionally, has an essential role in the assembly of mitochondrial respiratory chain complex III. Is also required for STAT3 activation and plays a role in cell migration. The chain is OCIA domain-containing protein 2 (OCIAD2) from Homo sapiens (Human).